The sequence spans 1766 residues: Putative ATP-dependent RNA helicase R366 (1766 aa).

Positions 209–239 are disordered; it reads KSSSNQNSNQSNQESNESNQEPNESNQEINQ. The segment covering 210 to 239 has biased composition (low complexity); that stretch reads SSSNQNSNQSNQESNESNQEPNESNQEINQ. The Helicase ATP-binding domain occupies 656-865; sequence YHHYSNNRVL…RYYRRINDNR (210 aa). 669 to 676 lines the ATP pocket; it reads GATGVGKS. Residues 812-815 carry the DEAH box motif; that stretch reads DEAH. The Helicase C-terminal domain occupies 947–1116; the sequence is DIHKSIKAIN…TMVKLIKSYP (170 aa).

Belongs to the DEAD box helicase family. DEAH subfamily.

The enzyme catalyses ATP + H2O = ADP + phosphate + H(+). This Acanthamoeba polyphaga mimivirus (APMV) protein is Putative ATP-dependent RNA helicase R366.